A 77-amino-acid chain; its full sequence is Liver-expressed antimicrobial peptide 2 (77 aa).

The N-terminal stretch at 1–22 (MWHLKLCAVLMIFLLLLGQIDG) is a signal peptide. A propeptide spanning residues 23–37 (SPIPEVSSAKRRPRR) is cleaved from the precursor. Intrachain disulfides connect cysteine 54–cysteine 65 and cysteine 60–cysteine 70.

This sequence belongs to the LEAP2 family.

It localises to the secreted. Has an antimicrobial activity. The protein is Liver-expressed antimicrobial peptide 2 (LEAP2) of Homo sapiens (Human).